Reading from the N-terminus, the 374-residue chain is F-box/LRR-repeat protein 8 (374 aa).

The F-box domain maps to 2–48; it reads AEPGEQLPEEVLALIFRHLPLPDRAAAARVCRAWAAAATCSAVWHDT.

Directly interacts with SKP1 and CUL1.

In terms of biological role, substrate-recognition component of the SCF (SKP1-CUL1-F-box protein)-type E3 ubiquitin ligase complex. In Bos taurus (Bovine), this protein is F-box/LRR-repeat protein 8 (FBXL8).